Reading from the N-terminus, the 746-residue chain is Stromal interaction molecule 2 (746 aa).

An N-terminal signal peptide occupies residues 1–14; the sequence is MLLFGLLVAGVADG. The Extracellular segment spans residues 15–218; sequence CDLVPRHLRG…RPPHNWMKDF (204 aa). The residue at position 28 (S28) is a Phosphoserine. The EF-hand domain maps to 67–102; sequence FSLEALQTIHKQMDDDKDGGIEVDESDEFIREDMKY. D80, D82, D84, and E91 together coordinate Ca(2+). N135 is a glycosylation site (N-linked (GlcNAc...) asparagine). The SAM domain maps to 136–204; the sequence is WTLEDTLQWL…QLKALDVVLF (69 aa). A helical transmembrane segment spans residues 219 to 235; the sequence is ILTISIVIGVGGCWFAY. Residues 236-746 are Cytoplasmic-facing; it reads TQNKTSKEHV…IKSLFKKKSK (511 aa). Positions 247–394 form a coiled coil; it reads KMMKDLESLQ…EKIKKKRSTV (148 aa). 2 disordered regions span residues 490 to 562 and 592 to 651; these read PIVP…PDIL and DTAS…RGSP. S523 carries the post-translational modification Phosphoserine. Low complexity predominate over residues 527–539; it reads QRAQLPAHAPLAA. Residues 540 to 549 show a composition bias toward basic residues; sequence HPRHPHHPQH. S609 and S621 each carry phosphoserine. Residues 625-637 are compositionally biased toward basic and acidic residues; the sequence is ISRDELSLEDSSR. S640, S650, S661, S665, S680, and S697 each carry phosphoserine. The disordered stretch occupies residues 684–746; that stretch reads LSSGIPVPHP…IKSLFKKKSK (63 aa). A compositionally biased stretch (basic and acidic residues) spans 723–732; that stretch reads DLCHNGEKSK. Residues 733–746 are compositionally biased toward basic residues; the sequence is KPSKIKSLFKKKSK.

Oligomer with STIM1. Interacts with ORAI1. In terms of processing, glycosylated. Post-translationally, phosphorylated predominantly on Ser residues.

It localises to the endoplasmic reticulum membrane. In terms of biological role, plays a role in mediating store-operated Ca(2+) entry (SOCE), a Ca(2+) influx following depletion of intracellular Ca(2+) stores. Functions as a highly sensitive Ca(2+) sensor in the endoplasmic reticulum which activates both store-operated and store-independent Ca(2+)-influx. Regulates basal cytosolic and endoplasmic reticulum Ca(2+) concentrations. Upon mild variations of the endoplasmic reticulum Ca(2+) concentration, translocates from the endoplasmic reticulum to the plasma membrane where it probably activates the Ca(2+) release-activated Ca(2+) (CRAC) channels ORAI1, ORAI2 and ORAI3. May inhibit STIM1-mediated Ca(2+) influx. In Mus musculus (Mouse), this protein is Stromal interaction molecule 2 (Stim2).